Here is a 1054-residue protein sequence, read N- to C-terminus: Acid trehalase (1054 aa).

An N-terminal signal peptide occupies residues 1 to 21 (MRFKSVFTLLPLLAQLPSGGA). Residues Asn47, Asn135, Asn176, Asn283, and Asn307 are each glycosylated (N-linked (GlcNAc...) asparagine). 448 to 449 (WD) is a binding site for substrate. Asn493, Asn513, Asn570, and Asn578 each carry an N-linked (GlcNAc...) asparagine glycan. Glu584 serves as the catalytic Proton donor. Asn618 and Asn644 each carry an N-linked (GlcNAc...) asparagine glycan. 650–651 (KQ) provides a ligand contact to substrate. Asn665, Asn734, Asn803, Asn826, Asn838, Asn903, Asn937, Asn966, and Asn992 each carry an N-linked (GlcNAc...) asparagine glycan.

This sequence belongs to the glycosyl hydrolase 65 family.

It catalyses the reaction alpha,alpha-trehalose + H2O = alpha-D-glucose + beta-D-glucose. In Emericella nidulans (strain FGSC A4 / ATCC 38163 / CBS 112.46 / NRRL 194 / M139) (Aspergillus nidulans), this protein is Acid trehalase (treA).